The sequence spans 487 residues: MPLPVQVFNLQSAVEPMQIDADPQDDQQNMPDVNYVVENPTLDLEQYASSYSGLMRIERLQFIADRCPQLRVEALKMALSFVQRTFNVDVYEDIHRKLAEASREVQNAPDAVPEGSMEPPALDTSWVEATRKKALLKLEKLDTDLKNYKGNSIKESIRRGHDDLGDHYLDCGDLSNALKCYSRARDYCTSAKHVINMCLNVIKVSVYLQNWSHVLSYVSKAESTPEIAEQRGERDSQTQAVLTKLKCAAGLAELAARKYKQAAKCFLLASFDHCDFPELLSPSNVAVYGGLCALATFDRQELQRNVISSSSFKLFLELEPQVRDIIFKFYESKYASCLKMLDEIKDNLLLDMYLAPHVRTLYTQIRNRALIQYFSPYVSADMYKMATAFNTTVSALEDELTQLILEGLINARIDSHSKILYARDVDQRSTTFEKSLQMGREFQRRAKAMILRAAVLRNQIHVKSPPREGSQGELTPANSQSRLSTNM.

The segment at 103–123 is disordered; it reads REVQNAPDAVPEGSMEPPALD. A PCI domain is found at 265 to 427; that stretch reads CFLLASFDHC…KILYARDVDQ (163 aa). The tract at residues 461–487 is disordered; sequence HVKSPPREGSQGELTPANSQSRLSTNM. Over residues 472 to 487 the composition is skewed to polar residues; the sequence is GELTPANSQSRLSTNM.

This sequence belongs to the CSN1 family. Component of the CSN complex, probably composed of cops1, cops2, cops3, cops4, cops5, cops6, cops7, cops8 and cops9.

It is found in the cytoplasm. It localises to the nucleus. Essential component of the COP9 signalosome complex (CSN), a complex involved in various cellular and developmental processes. The CSN complex is an essential regulator of the ubiquitin (Ubl) conjugation pathway by mediating the deneddylation of the cullin subunits of E3 ligase complexes, leading to modify the Ubl ligase activity. The polypeptide is COP9 signalosome complex subunit 1 (csn1) (Xenopus laevis (African clawed frog)).